Reading from the N-terminus, the 498-residue chain is PHD finger protein 10 (498 aa).

The span at 1–10 (MAAAAGPGAA) shows a compositional bias: low complexity. The disordered stretch occupies residues 1–62 (MAAAAGPGAA…SSRSCETSSQ (62 aa)). N-acetylalanine is present on alanine 2. Serine 12, serine 36, and serine 50 each carry phosphoserine. Positions 89–185 (MLQEQVSEYL…HYKEYSQMQQ (97 aa)) are essential to induce neural progenitor proliferation. The segment at 89-295 (MLQEQVSEYL…PPLDPELPAL (207 aa)) is SAY. Residue lysine 241 forms a Glycyl lysine isopeptide (Lys-Gly) (interchain with G-Cter in SUMO2) linkage. Serine 270 is subject to Phosphoserine. Over residues 285 to 296 (EPPLDPELPALD) the composition is skewed to low complexity. A disordered region spans residues 285–368 (EPPLDPELPA…KRSVLSKSVP (84 aa)). The segment at 292-334 (LPALDSDGDSDDGEDGRGDEKRKNKGTSDSSSGNVSEGESPPD) is essential to induce neural progenitor proliferation. 4 positions are modified to phosphoserine: serine 297, serine 301, serine 327, and serine 331. The segment covering 318 to 328 (TSDSSSGNVSE) has biased composition (polar residues). Basic and acidic residues predominate over residues 345–359 (KSKDKAATPRKDGPK). The segment at 379 to 436 (ICGICLKGKESNKKGKAESLIHCSQCENSGHPSCLDMTMELVSMIKTYPWQCMECKTC) adopts a PHD-type 1; degenerate zinc-finger fold. A Glycyl lysine isopeptide (Lys-Gly) (interchain with G-Cter in SUMO2) cross-link involves residue lysine 385. A PHD-type 2; degenerate zinc finger spans residues 438-481 (ICGQPHHEEEMMFCDMCDRGYHTFCVGLGAIPSGRWICDCCQRA).

It belongs to the SAYP family. In terms of assembly, component of neural progenitors-specific chromatin remodeling complex (npBAF complex) composed of at least, ARID1A/BAF250A or ARID1B/BAF250B, SMARCD1/BAF60A, SMARCD3/BAF60C, SMARCA2/BRM/BAF190B, SMARCA4/BRG1/BAF190A, SMARCB1/BAF47, SMARCC1/BAF155, SMARCE1/BAF57, SMARCC2/BAF170, PHF10/BAF45A, ACTL6A/BAF53A and actin. Interacts with ACTL6A/BAF53A, SMARCA2/BRM/BAF190B, SMARCA4/BRG1/BAF190A and PBRM1/BAF180.

It localises to the nucleus. In terms of biological role, involved in transcription activity regulation by chromatin remodeling. Belongs to the neural progenitors-specific chromatin remodeling complex (npBAF complex) and is required for the proliferation of neural progenitors. During neural development a switch from a stem/progenitor to a post-mitotic chromatin remodeling mechanism occurs as neurons exit the cell cycle and become committed to their adult state. The transition from proliferating neural stem/progenitor cells to post-mitotic neurons requires a switch in subunit composition of the npBAF and nBAF complexes. As neural progenitors exit mitosis and differentiate into neurons, npBAF complexes which contain ACTL6A/BAF53A and PHF10/BAF45A, are exchanged for homologous alternative ACTL6B/BAF53B and DPF1/BAF45B or DPF3/BAF45C subunits in neuron-specific complexes (nBAF). The npBAF complex is essential for the self-renewal/proliferative capacity of the multipotent neural stem cells. The nBAF complex along with CREST plays a role regulating the activity of genes essential for dendrite growth. The polypeptide is PHD finger protein 10 (PHF10) (Homo sapiens (Human)).